Reading from the N-terminus, the 148-residue chain is Lysozyme C (148 aa).

The N-terminal stretch at 1–18 (MKALIILGLVLLSVTVQG) is a signal peptide. Residues 19–148 (KIFERCELAR…VSQYVKGCGV (130 aa)) enclose the C-type lysozyme domain. Intrachain disulfides connect Cys-24–Cys-146, Cys-48–Cys-134, Cys-83–Cys-99, and Cys-95–Cys-113. Active-site residues include Glu-53 and Asp-71.

The protein belongs to the glycosyl hydrolase 22 family. In terms of assembly, monomer.

It localises to the secreted. It catalyses the reaction Hydrolysis of (1-&gt;4)-beta-linkages between N-acetylmuramic acid and N-acetyl-D-glucosamine residues in a peptidoglycan and between N-acetyl-D-glucosamine residues in chitodextrins.. Functionally, lysozymes have primarily a bacteriolytic function; those in tissues and body fluids are associated with the monocyte-macrophage system and enhance the activity of immunoagents. This is Lysozyme C (LYZ) from Nasalis larvatus (Proboscis monkey).